We begin with the raw amino-acid sequence, 552 residues long: Glutamine--tRNA ligase (552 aa).

The short motif at 34–44 is the 'HIGH' region element; sequence PEPNGYLHIGH. Residues 35 to 37 and 41 to 47 each bind ATP; these read EPN and HIGHAKS. Residues D67 and Y212 each coordinate L-glutamine. Residues T231, 261 to 262, and 269 to 271 each bind ATP; these read RL and MSK. The short motif at 268–272 is the 'KMSKS' region element; it reads VMSKR.

The protein belongs to the class-I aminoacyl-tRNA synthetase family. Monomer.

The protein localises to the cytoplasm. The catalysed reaction is tRNA(Gln) + L-glutamine + ATP = L-glutaminyl-tRNA(Gln) + AMP + diphosphate. This is Glutamine--tRNA ligase from Aliivibrio fischeri (strain MJ11) (Vibrio fischeri).